The following is a 301-amino-acid chain: GTPase Era (301 aa).

The 169-residue stretch at 7 to 175 folds into the Era-type G domain; the sequence is YCGFIAIVGR…AAIVRKHLPE (169 aa). The G1 stretch occupies residues 15–22; sequence GRPNVGKS. GTP is bound at residue 15–22; that stretch reads GRPNVGKS. The interval 41–45 is G2; it reads QTTRH. The G3 stretch occupies residues 62 to 65; the sequence is DTPG. Residues 62 to 66 and 124 to 127 contribute to the GTP site; these read DTPGL and NKVD. The interval 124-127 is G4; the sequence is NKVD. The segment at 154–156 is G5; that stretch reads ISA. Residues 206–283 enclose the KH type-2 domain; sequence LGAELPYSVT…HLELWVKVKS (78 aa).

This sequence belongs to the TRAFAC class TrmE-Era-EngA-EngB-Septin-like GTPase superfamily. Era GTPase family. Monomer.

The protein localises to the cytoplasm. Its subcellular location is the cell inner membrane. In terms of biological role, an essential GTPase that binds both GDP and GTP, with rapid nucleotide exchange. Plays a role in 16S rRNA processing and 30S ribosomal subunit biogenesis and possibly also in cell cycle regulation and energy metabolism. The protein is GTPase Era of Shigella flexneri serotype 5b (strain 8401).